A 230-amino-acid polypeptide reads, in one-letter code: Orotidine 5'-phosphate decarboxylase (230 aa).

Substrate is bound by residues Asp11, Lys34, 61–70, Thr117, Arg179, Gln188, Gly208, and Arg209; that span reads DLKLHDIPNT. Catalysis depends on Lys63, which acts as the Proton donor.

This sequence belongs to the OMP decarboxylase family. Type 1 subfamily. As to quaternary structure, homodimer.

The catalysed reaction is orotidine 5'-phosphate + H(+) = UMP + CO2. Its pathway is pyrimidine metabolism; UMP biosynthesis via de novo pathway; UMP from orotate: step 2/2. Functionally, catalyzes the decarboxylation of orotidine 5'-monophosphate (OMP) to uridine 5'-monophosphate (UMP). This is Orotidine 5'-phosphate decarboxylase from Streptococcus uberis (strain ATCC BAA-854 / 0140J).